Reading from the N-terminus, the 1060-residue chain is Anoctamin-8 (1060 aa).

Residues 1 to 32 (MAEAASGAGDVTLEGERGKRPPPEGEPAAPAS) form a disordered region. Ala-2 carries the N-acetylalanine modification. Residues 2 to 244 (AEAASGAGDV…DDICDYFGVK (243 aa)) are Cytoplasmic-facing. Positions 14–23 (EGERGKRPPP) are enriched in basic and acidic residues. The chain crosses the membrane as a helical span at residues 245 to 265 (IAMYFAWLGFYTSAMVYPAVF). Residues 266 to 281 (GSVLYTFTEADQTSRD) lie on the Extracellular side of the membrane. A helical transmembrane segment spans residues 282 to 302 (VSCVVFALFNVIWSTLFLEEW). The Cytoplasmic segment spans residues 303–356 (KRRGAELAYKWGTLDSPGEAVEEPRPQFRGIRRISPITRAEEFYYPPWKRLLFQ). Ser-318 carries the post-translational modification Phosphoserine. A helical membrane pass occupies residues 357-377 (LLVSLPLCLACLICVFILMLG). The Extracellular segment spans residues 378–400 (CFQLQELVLSVKGLPRLVRFLPK). Residues 401-421 (VMLALLVSVSAEGYKKLAVWL) form a helical membrane-spanning segment. The Cytoplasmic portion of the chain corresponds to 422–437 (NDMENYRLESTYERHL). Residues 438–458 (IIKVVLFQFVNSYLSLFYIGF) traverse the membrane as a helical segment. The Extracellular portion of the chain corresponds to 459-745 (YLKDMDRLKE…YEDTFQDYQE (287 aa)). 4 disordered regions span residues 529–605 (AQAD…SLLD), 619–640 (GAGR…SPTM), 653–672 (AEED…EPQT), and 680–723 (GEGR…HSPQ). Positions 534 to 547 (GGAGSRRCLGGGCG) are enriched in gly residues. Acidic residues-rich tracts occupy residues 549–559 (PEEENEEEEEA) and 581–602 (EEDE…EEGS). Ser-665 carries the post-translational modification Phosphoserine. Positions 680–694 (GEGRDQGPDGDRDTE) are enriched in basic and acidic residues. Residue Asn-708 is glycosylated (N-linked (GlcNAc...) asparagine). Residues 746 to 766 (MFVQFGYVVLFSSAFPLAALC) traverse the membrane as a helical segment. Residues 767 to 802 (ALVNNLIEIRSDAFKLCTGLQRPFGRRVESIGQWQK) are Cytoplasmic-facing. Ser-796 is modified (phosphoserine). The chain crosses the membrane as a helical span at residues 803-823 (VMEAMGVLAIVVNCYLIGQCG). Residues 824-836 (QLQRLFPWLSPEA) are Extracellular-facing. A helical membrane pass occupies residues 837 to 857 (AIVSVVVLEHLALLVKYLIHV). The Cytoplasmic segment spans residues 858-1060 (AIPDIPGWVA…PRPEDAGHRP (203 aa)). Residues 884–1060 (HERQAQQRFQ…PRPEDAGHRP (177 aa)) are disordered. Basic and acidic residues-rich tracts occupy residues 899-927 (RREE…EARA) and 935-950 (VAER…ERPR). Residues 972 to 986 (TRPPAPTGCAPPPRS) show a composition bias toward pro residues. Position 991 is an asymmetric dimethylarginine; alternate (Arg-991). Position 991 is an omega-N-methylarginine; alternate (Arg-991). An Omega-N-methylarginine modification is found at Arg-999. Over residues 1049 to 1060 (PEPRPEDAGHRP) the composition is skewed to basic and acidic residues.

The protein belongs to the anoctamin family. Predominant expression seen in epithelial tissues.

It localises to the cell membrane. Does not exhibit calcium-activated chloride channel (CaCC) activity. The sequence is that of Anoctamin-8 (Ano8) from Mus musculus (Mouse).